The sequence spans 144 residues: Globin (144 aa).

An N-acetylalanine modification is found at A1. Residues A1–K144 form the Globin domain. H95 lines the heme b pocket.

It belongs to the globin family. As to quaternary structure, monomer.

The polypeptide is Globin (Aplysia juliana (Walking sea hare)).